The following is a 668-amino-acid chain: Spindle assembly abnormal protein 6 homolog (668 aa).

The PISA domain maps to 39–91 (VHKKELVVRLSDDTDPFFLYNLTLGEEDFQSLKNQQGLLVEFSAFPQRFIDLL). Residues 182–482 (LGVTQQALAE…NVIAWLNKQL (301 aa)) adopt a coiled-coil conformation. The tract at residues 623–668 (GSVPVKGQRNGSSAGTVPVRPALPKSGSSPILSAYFPGQQSRLPAS) is disordered.

As to quaternary structure, nine homodimers form a cartwheel structure with an internal diameter of 23 nM and radial spokes connecting to the microtubule triplets.

The protein resides in the cytoplasm. It localises to the cytoskeleton. Its subcellular location is the microtubule organizing center. It is found in the centrosome. Its function is as follows. Central scaffolding component of the centrioles ensuring their 9-fold symmetry. Required for centrosome biogenesis and duplication: required both for mother-centriole-dependent centriole duplication and deuterosome-dependent centriole amplification in multiciliated cells. The chain is Spindle assembly abnormal protein 6 homolog (sas6) from Xenopus laevis (African clawed frog).